A 118-amino-acid chain; its full sequence is Putative pterin-4-alpha-carbinolamine dehydratase (118 aa).

It belongs to the pterin-4-alpha-carbinolamine dehydratase family.

It carries out the reaction (4aS,6R)-4a-hydroxy-L-erythro-5,6,7,8-tetrahydrobiopterin = (6R)-L-erythro-6,7-dihydrobiopterin + H2O. The protein is Putative pterin-4-alpha-carbinolamine dehydratase of Pseudomonas putida (strain GB-1).